Consider the following 415-residue polypeptide: Fructose-like permease IIC component 1 (415 aa).

The Cytoplasmic portion of the chain corresponds to 1–46; sequence MAIKKRSATVVPGASGAAAAVKNPQASKTSFWGELPQHVMSGISRM. The 376-residue stretch at 35-410 folds into the PTS EIIC type-2 domain; it reads LPQHVMSGIS…RLMMFRKGKL (376 aa). Residues 47–67 traverse the membrane as a helical segment; the sequence is VPTLIMGGVILAFSQLIAYSW. The Periplasmic portion of the chain corresponds to 68–101; it reads LKIPAEIGIMDALNSGKFSGFDLSLLKFAWLSQS. The helical transmembrane segment at 102–122 threads the bilayer; the sequence is FGGVLFGFAIPMFAAFVANSI. Over 123–126 the chain is Cytoplasmic; it reads GGKL. Residues 127 to 147 form a helical membrane-spanning segment; sequence AFPAGFIGGLMSTQPTQLLNF. The Periplasmic segment spans residues 148–157; that stretch reads DPSTMQWATS. A helical transmembrane segment spans residues 158–178; sequence SPVPSTFIGALIISIVAGYLV. Topologically, residues 179–197 are cytoplasmic; the sequence is KWMNQKIQLPDFLLAFKTT. The chain crosses the membrane as a helical span at residues 198-218; the sequence is FLLPILSAIFVMLAMYYVITP. Topologically, residues 219 to 237 are periplasmic; the sequence is FGGWINGGIRTVLTAAGEK. The chain crosses the membrane as a helical span at residues 238 to 258; it reads GALMYAMGIAAATAIDLGGPI. The Cytoplasmic segment spans residues 259 to 276; the sequence is NKAAGFVAFSFTTDHVLP. The chain crosses the membrane as a helical span at residues 277–297; the sequence is VTARSIAIVIPPIGLGLATII. Residues 298–318 lie on the Periplasmic side of the membrane; the sequence is DRRLTGKRLFNAQLYPQGKTA. A helical membrane pass occupies residues 319–339; the sequence is MFLAFMGISEGAIPFALESPI. Over 340-341 the chain is Cytoplasmic; sequence TA. A helical membrane pass occupies residues 342–362; the sequence is IPSYMVGAIVGSTAAVWLGAV. Residues 363 to 378 are Periplasmic-facing; it reads QWFPESAIWAWPLVTN. The chain crosses the membrane as a helical span at residues 379-399; the sequence is LGVYMAGIALGAVITALMVVF. The Cytoplasmic portion of the chain corresponds to 400–415; it reads LRLMMFRKGKLLIDSL.

Its subcellular location is the cell inner membrane. Functionally, the phosphoenolpyruvate-dependent sugar phosphotransferase system (PTS), a major carbohydrate active -transport system, catalyzes the phosphorylation of incoming sugar substrates concomitant with their translocation across the cell membrane. The sequence is that of Fructose-like permease IIC component 1 (fryC) from Escherichia coli (strain K12).